Here is a 116-residue protein sequence, read N- to C-terminus: MTHLLTVFLVALMGLPVAQALECHVCAYNGDNCFKPMRCPAMATYCMTTRTYFTPYRMKVRKSCVPSCFETVYDGYSKHASATSCCQYYLCNGAGFATPVTLALVPALLATFWSLL.

A signal peptide spans 1 to 20; it reads MTHLLTVFLVALMGLPVAQA. The region spanning 21–104 is the UPAR/Ly6 domain; sequence LECHVCAYNG…GFATPVTLAL (84 aa). Disulfide bonds link Cys23/Cys46, Cys26/Cys33, Cys39/Cys64, Cys68/Cys85, and Cys86/Cys91. The GPI-anchor amidated asparagine moiety is linked to residue Asn92. Residues 93–116 constitute a propeptide, removed in mature form; the sequence is GAGFATPVTLALVPALLATFWSLL.

As to quaternary structure, interacts with nAChRs containing alpha-4:beta-2 (CHRNA4:CHRNB2) and alpha-7 (CHRNA7) subunits. Interacts with CHRNA4 probably in the endoplasmic reticulum prior to nAChR pentameric assembly. Interacts with KCNA2/Potassium voltage-gated channel subfamily A member 2. As to expression, expressed in neurons of multiple regions in the CNS, including the cerebral cortex, thalamus, substantia nigra, cerebellum, amygdala and hippocampus. Also expressed in kidney, heart and thymus, but at lower levels than in the brain. Expressed in the primary visual cortex (V1) and the lateral geniculate nucleus (at protein level).

It localises to the cell membrane. The protein resides in the cell projection. It is found in the dendrite. Its subcellular location is the endoplasmic reticulum. In terms of biological role, acts in different tissues through interaction to nicotinic acetylcholine receptors (nAChRs). The proposed role as modulator of nAChR activity seems to be dependent on the nAChR subtype and stoichiometry, and to involve an effect on nAChR trafficking and its cell surface expression, and on single channel properties of the nAChR inserted in the plasma membrane. Modulates functional properties of nicotinic acetylcholine receptors (nAChRs) to prevent excessive excitation, and hence neurodegeneration. Enhances desensitization by increasing both the rate and extent of desensitization of alpha-4:beta-2-containing nAChRs and slowing recovery from desensitization. Promotes large amplitude ACh-evoked currents through alpha-4:beta-2 nAChRs. Is involved in regulation of the nAChR pentameric assembly in the endoplasmic reticulum. Shifts stoichiometry from high sensitivity alpha-4(2):beta-2(3) to low sensitivity alpha-4(3):beta-2(2) nAChR. In vitro modulates alpha-3:beta-4-containing nAChRs. Reduces cell surface expression of (alpha-3:beta-4)(2):beta-4 and (alpha-3:beta-4)(2):alpha-5 nAChRs suggesting an interaction with nAChR alpha-3(-):(+)beta-4 subunit interfaces and an allosteric mode. Corresponding single channel effects characterized by decreased unitary conductance, altered burst proportions and enhanced desensitization/inactivation seem to depend on nAChR alpha:alpha subunit interfaces and are greater in (alpha-3:beta-2)(2):alpha-3 when compared to (alpha-3:beta-2)(2):alpha-5 nAChRs. Prevents plasticity in the primary visual cortex late in life. This is Ly-6/neurotoxin-like protein 1 from Mus musculus (Mouse).